The sequence spans 217 residues: Adapter protein MecA (217 aa).

The protein belongs to the MecA family. Homodimer.

Enables the recognition and targeting of unfolded and aggregated proteins to the ClpC protease or to other proteins involved in proteolysis. The polypeptide is Adapter protein MecA (Listeria monocytogenes serotype 4b (strain CLIP80459)).